The chain runs to 419 residues: G protein-activated inward rectifier potassium channel 4 (419 aa).

The interval 1-24 (MAGDSRNAMNQDMEIGVTPRDPKK) is disordered. The Cytoplasmic segment spans residues 1–86 (MAGDSRNAMN…LFTTLVDLKW (86 aa)). The residue at position 5 (Ser-5) is a Phosphoserine. A helical membrane pass occupies residues 87 to 111 (RFNLLVFTMVYTITWLFFGFIWWLI). The Extracellular portion of the chain corresponds to 112–135 (AYIRGDLDHVGDREWIPCVENLSG). The segment at residues 136–147 (FVSAFLFSIETE) is an intramembrane region (helical; Pore-forming). Positions 148–154 (TTIGYGF) form an intramembrane region, pore-forming. The Selectivity filter signature appears at 149 to 154 (TIGYGF). The Extracellular portion of the chain corresponds to 155-163 (RVITEKCPE). A helical transmembrane segment spans residues 164–185 (GIVLLLVQAILGSIVNAFMVGC). Topologically, residues 186-419 (MFVKISQPKK…SGSQETKDSA (234 aa)) are cytoplasmic. A disordered region spans residues 381–419 (PSPPLPGGCVGAELGAEAEQEGEEEPEGLSGSQETKDSA). Acidic residues predominate over residues 396–407 (AEAEQEGEEEPE).

This sequence belongs to the inward rectifier-type potassium channel (TC 1.A.2.1) family. KCNJ5 subfamily. Associates with KCNJ3/GIRK1 or KCNJ6/GIRK2 to form a G-protein-activated heteromultimer pore-forming unit. The resulting inward current is much larger.

Its subcellular location is the membrane. It catalyses the reaction K(+)(in) = K(+)(out). Heteromultimer composed of KCNJ3/GIRK1 and KCNJ5/GIRK4 is activated by phosphatidylinositol 4,5 biphosphate (PtdIns(4,5)P2). Inward rectifier potassium channels are characterized by a greater tendency to allow potassium to flow into the cell rather than out of it. Their voltage dependence is regulated by the concentration of extracellular potassium; as external potassium is raised, the voltage range of the channel opening shifts to more positive voltages. The inward rectification is mainly due to the blockage of outward current by internal magnesium. This receptor plays a crucial role in regulating the heartbeat. Can be blocked by external barium. This potassium channel is controlled by G proteins. The sequence is that of G protein-activated inward rectifier potassium channel 4 (KCNJ5) from Bos taurus (Bovine).